The sequence spans 173 residues: Translation initiation factor IF-3 (173 aa).

The protein belongs to the IF-3 family. Monomer.

The protein resides in the cytoplasm. Functionally, IF-3 binds to the 30S ribosomal subunit and shifts the equilibrium between 70S ribosomes and their 50S and 30S subunits in favor of the free subunits, thus enhancing the availability of 30S subunits on which protein synthesis initiation begins. This chain is Translation initiation factor IF-3, found in Methylobacterium sp. (strain 4-46).